The following is a 116-amino-acid chain: Large ribosomal subunit protein uL18 (116 aa).

It belongs to the universal ribosomal protein uL18 family. In terms of assembly, part of the 50S ribosomal subunit; part of the 5S rRNA/L5/L18/L25 subcomplex. Contacts the 5S and 23S rRNAs.

Its function is as follows. This is one of the proteins that bind and probably mediate the attachment of the 5S RNA into the large ribosomal subunit, where it forms part of the central protuberance. The sequence is that of Large ribosomal subunit protein uL18 from Acholeplasma laidlawii (strain PG-8A).